We begin with the raw amino-acid sequence, 139 residues long: General odorant-binding protein 56a (139 aa).

The first 19 residues, 1–19, serve as a signal peptide directing secretion; the sequence is MNSYFVIALSALFVTLAVG. N-linked (GlcNAc...) asparagine glycosylation occurs at Asn-23. Cystine bridges form between Cys-39–Cys-71, Cys-67–Cys-118, and Cys-109–Cys-127.

This sequence belongs to the PBP/GOBP family. Expressed in ventral pits of larvae. In adults, it is not specifically expressed in chemosensory organs. Also expressed in stalk cells at the proximal tip of the wing disk.

It is found in the secreted. In terms of biological role, present in the aqueous fluid surrounding olfactory sensory dendrites and are thought to aid in the capture and transport of hydrophobic odorants into and through this fluid. In Drosophila melanogaster (Fruit fly), this protein is General odorant-binding protein 56a (Obp56a).